The primary structure comprises 131 residues: Profilin-1 (131 aa).

The protein belongs to the profilin family. Occurs in many kinds of cells as a complex with monomeric actin in a 1:1 ratio.

The protein localises to the cytoplasm. The protein resides in the cytoskeleton. Functionally, binds to actin and affects the structure of the cytoskeleton. At high concentrations, profilin prevents the polymerization of actin, whereas it enhances it at low concentrations. By binding to PIP2, it inhibits the formation of IP3 and DG. The chain is Profilin-1 from Ambrosia artemisiifolia (Common ragweed).